Reading from the N-terminus, the 170-residue chain is Peptide deformylase (170 aa).

Fe cation is bound by residues C92 and H134. E135 is an active-site residue. Position 138 (H138) interacts with Fe cation.

The protein belongs to the polypeptide deformylase family. The cofactor is Fe(2+).

It catalyses the reaction N-terminal N-formyl-L-methionyl-[peptide] + H2O = N-terminal L-methionyl-[peptide] + formate. Its function is as follows. Removes the formyl group from the N-terminal Met of newly synthesized proteins. Requires at least a dipeptide for an efficient rate of reaction. N-terminal L-methionine is a prerequisite for activity but the enzyme has broad specificity at other positions. The protein is Peptide deformylase of Chromohalobacter salexigens (strain ATCC BAA-138 / DSM 3043 / CIP 106854 / NCIMB 13768 / 1H11).